The chain runs to 1039 residues: Integrin alpha-4 (1039 aa).

An N-terminal signal peptide occupies residues 1-40 (MFSTKSAWLRNGGADQGPRGIALREAVMLLLYFGVPTGPS). The Extracellular portion of the chain corresponds to 41-983 (YNLDPENALL…LHHQRPKRHF (943 aa)). FG-GAP repeat units lie at residues 42–107 (NLDP…PNQT), 117–184 (SGEP…TELS), 193–244 (DYTR…QYKA), 246–298 (VDRQ…ENEL), 299–358 (NIVY…GAVM), 362–419 (ERVL…GISS), and 423–485 (QRIE…HPES). Asn-86, Asn-105, and Asn-145 each carry an N-linked (GlcNAc...) asparagine glycan. Residues Cys-98 and Cys-108 are joined by a disulfide bond. 2 disulfides stabilise this stretch: Cys-151/Cys-172 and Cys-190/Cys-205. The N-linked (GlcNAc...) asparagine glycan is linked to Asn-236. Residues Asp-321, Asn-323, Asp-325, Asp-329, Asp-384, Asp-386, Asp-388, Asp-392, Asp-446, Asp-448, Asn-450, Tyr-452, and Asp-454 each contribute to the Ca(2+) site. A glycan (N-linked (GlcNAc...) asparagine) is linked at Asn-487. 2 cysteine pairs are disulfide-bonded: Cys-493–Cys-502 and Cys-508–Cys-564. N-linked (GlcNAc...) asparagine glycans are attached at residues Asn-525 and Asn-545. The SG1 motif lies at 613–623 (KKEKDVIRKMI). Cys-629 and Cys-634 are disulfide-bonded. Residues Asn-633, Asn-652, and Asn-667 are each glycosylated (N-linked (GlcNAc...) asparagine). A disulfide bond links Cys-705 and Cys-718. N-linked (GlcNAc...) asparagine glycans are attached at residues Asn-813 and Asn-828. Disulfide bonds link Cys-859/Cys-897 and Cys-904/Cys-909. Residues 984–1007 (TIIIITISLLLGLIVLLLISCVMW) form a helical membrane-spanning segment. Residues 1008 to 1039 (KAGFFKRQYKSILQEENRRDSWSYVNSKSNDD) are Cytoplasmic-facing. Positions 1010-1014 (GFFKR) match the GFFKR motif motif. Phosphoserine is present on Ser-1028.

Belongs to the integrin alpha chain family. Heterodimer of an alpha and a beta subunit. The alpha subunit can sometimes be cleaved into two non-covalently associated fragments. Alpha-4 associates with either beta-1 or beta-7. Alpha-4 interacts with PXN, LPXN, and TGFB1I1/HIC5. Interacts with CSPG4 through CSPG4 chondroitin sulfate glycosaminoglycan. Interacts with JAML; integrin alpha-4/beta-1 may regulate leukocyte to endothelial cells adhesion by controlling JAML homodimerization. ITGA4:ITGB1 is found in a ternary complex with CX3CR1 and CX3CL1. Interacts with MDK. ITGA4:ITGB1 interacts with MDK; this interaction mediates MDK-induced osteoblast cells migration through PXN phosphorylation. Integrin ITGA4:ITGB1 interacts with SVEP1 (via Sushi domain 21); thereby inhibits Ca(2+) intracellular signaling and as a result represses vasocontraction. ITGA4:ITGB1 interacts with SELP. ITGA4:ITGB1 interacts with BCAM. Phosphorylation on Ser-1028 inhibits PXN binding. In terms of tissue distribution, expressed in the media layer of the arterial wall (at protein level). Weakly expression in the thymus, spleen and mesenteric lymph nodes.

The protein resides in the membrane. Its function is as follows. Integrins alpha-4/beta-1 (VLA-4 or LPAM-2) and alpha-4/beta-7 (LPAM-1) are receptors for fibronectin. They recognize one or more domains within the alternatively spliced CS-1 and CS-5 regions of fibronectin. They are also receptors for VCAM1. Integrin alpha-4/beta-1 recognizes the sequence Q-I-D-S in VCAM1. Integrin alpha-4/beta-7 is also a receptor for MADCAM1. It recognizes the sequence L-D-T in MADCAM1. On activated endothelial cells integrin VLA-4 triggers homotypic aggregation for most VLA-4-positive leukocyte cell lines. It may also participate in cytolytic T-cell interactions with target cells. ITGA4:ITGB1 binds to fractalkine (CX3CL1) and may act as its coreceptor in CX3CR1-dependent fractalkine signaling. ITGA4:ITGB1 binds to PLA2G2A via a site (site 2) which is distinct from the classical ligand-binding site (site 1) and this induces integrin conformational changes and enhanced ligand binding to site 1. Integrin ITGA4:ITGB1 represses PRKCA-mediated L-type voltage-gated channel Ca(2+) influx and ROCK-mediated calcium sensitivity in vascular smooth muscle cells via its interaction with SVEP1, thereby inhibiting vasocontraction. The sequence is that of Integrin alpha-4 (Itga4) from Mus musculus (Mouse).